Consider the following 316-residue polypeptide: tRNA-dihydrouridine(16) synthase (316 aa).

FMN contacts are provided by residues 7-9 (PME) and Q68. C98 functions as the Proton donor in the catalytic mechanism. FMN-binding positions include K139, 200 to 202 (NGE), and 224 to 225 (GR).

Belongs to the Dus family. DusC subfamily. FMN serves as cofactor.

The catalysed reaction is 5,6-dihydrouridine(16) in tRNA + NADP(+) = uridine(16) in tRNA + NADPH + H(+). The enzyme catalyses 5,6-dihydrouridine(16) in tRNA + NAD(+) = uridine(16) in tRNA + NADH + H(+). Functionally, catalyzes the synthesis of 5,6-dihydrouridine (D), a modified base found in the D-loop of most tRNAs, via the reduction of the C5-C6 double bond in target uridines. Specifically modifies U16 in tRNAs. This Escherichia coli O157:H7 protein is tRNA-dihydrouridine(16) synthase.